Reading from the N-terminus, the 315-residue chain is Ribosomal RNA small subunit methyltransferase H (315 aa).

S-adenosyl-L-methionine-binding positions include 37-39 (GGH), Asp-57, Phe-83, Asp-105, and Gln-112.

This sequence belongs to the methyltransferase superfamily. RsmH family.

It localises to the cytoplasm. The enzyme catalyses cytidine(1402) in 16S rRNA + S-adenosyl-L-methionine = N(4)-methylcytidine(1402) in 16S rRNA + S-adenosyl-L-homocysteine + H(+). Functionally, specifically methylates the N4 position of cytidine in position 1402 (C1402) of 16S rRNA. This chain is Ribosomal RNA small subunit methyltransferase H, found in Pseudomonas putida (strain W619).